The following is an 89-amino-acid chain: Small ribosomal subunit protein uS15 (89 aa).

This sequence belongs to the universal ribosomal protein uS15 family. As to quaternary structure, part of the 30S ribosomal subunit. Forms a bridge to the 50S subunit in the 70S ribosome, contacting the 23S rRNA.

One of the primary rRNA binding proteins, it binds directly to 16S rRNA where it helps nucleate assembly of the platform of the 30S subunit by binding and bridging several RNA helices of the 16S rRNA. Its function is as follows. Forms an intersubunit bridge (bridge B4) with the 23S rRNA of the 50S subunit in the ribosome. The polypeptide is Small ribosomal subunit protein uS15 (Rippkaea orientalis (strain PCC 8801 / RF-1) (Cyanothece sp. (strain PCC 8801))).